Consider the following 150-residue polypeptide: Con-Ins Im1 (150 aa).

Residues 1-25 (MATSLLSPLLVAMLGFLLHVHVARA) form the signal peptide. Disulfide bonds link Cys31-Cys133, Cys46-Cys136, Cys58-Cys149, and Cys135-Cys140. A propeptide spans 64–111 (GYAGGQRQLRKRTSMIDSDDMEAEGGSRGGFLMSKRRALSYLQKETNP) (c peptide). Glu144 is modified (4-carboxyglutamate; partial).

This sequence belongs to the insulin family. Heterodimer of A and B chains; disulfide-linked. As to expression, expressed by the venom gland.

The protein resides in the secreted. This venom insulin facilitates prey capture by rapidly inducing hypoglycemic shock. Intraperitoneal injection of this peptide into zebrafish lowers blood glucose with the same potency than human insulin. In vivo, when applied to water, this peptide reduces overall locomotor activity of zebrafish larvae, observed as a significant decrease in the percentage of time spent swimming and movement frequency. The chain is Con-Ins Im1 from Conus imperialis (Imperial cone).